The chain runs to 248 residues: Isoprenyl transferase (248 aa).

The active site involves aspartate 28. Aspartate 28 serves as a coordination point for Mg(2+). Residues 29 to 32, tryptophan 33, arginine 41, histidine 45, and 73 to 75 each bind substrate; these read GNGR and SSE. The active-site Proton acceptor is the asparagine 76. Substrate contacts are provided by residues tryptophan 77, arginine 79, arginine 196, and 202–204; that span reads RLS. Glutamate 215 serves as a coordination point for Mg(2+).

It belongs to the UPP synthase family. As to quaternary structure, homodimer. Mg(2+) serves as cofactor.

In terms of biological role, catalyzes the condensation of isopentenyl diphosphate (IPP) with allylic pyrophosphates generating different type of terpenoids. This chain is Isoprenyl transferase, found in Zymomonas mobilis subsp. mobilis (strain ATCC 31821 / ZM4 / CP4).